Reading from the N-terminus, the 85-residue chain is Small muscular protein (85 aa).

The segment at P19–P63 is disordered. S36 bears the Phosphoserine mark. T47 carries the post-translational modification Phosphothreonine.

The protein belongs to the SMPX family.

Plays a role in the regulatory network through which muscle cells coordinate their structural and functional states during growth, adaptation, and repair. This is Small muscular protein (Smpx) from Rattus norvegicus (Rat).